The sequence spans 310 residues: Malate dehydrogenase (310 aa).

NAD(+)-binding positions include 7–12 (GAGNVG) and Asp32. 2 residues coordinate substrate: Arg81 and Arg87. NAD(+)-binding positions include Asn94 and 117–119 (VSN). Positions 119 and 150 each coordinate substrate. His174 (proton acceptor) is an active-site residue.

Belongs to the LDH/MDH superfamily. MDH type 3 family. Homotetramer; arranged as a dimer of dimers.

The enzyme catalyses (S)-malate + NAD(+) = oxaloacetate + NADH + H(+). Its function is as follows. Catalyzes the reversible oxidation of malate to oxaloacetate. This Chlorobaculum tepidum (strain ATCC 49652 / DSM 12025 / NBRC 103806 / TLS) (Chlorobium tepidum) protein is Malate dehydrogenase.